The chain runs to 945 residues: MRPKWCKTTVLASFPRGSACTARQLKHSANRIYLDARASVPARRAGILNEDRIELPDDAIGASAERRSTRDLRKPSRAGIQHERAVGLMSRQTDNTYPKPLVMPKRGPSAALRLLIVGILLMGAAFIYFLFRDQLGDGFALVLMGVLSMVGVFYLFGAATGLIQFSQRSDHQDLAHSFMDTQPEGTVISDPRGQIVYANQAYARMTGATDADGIRPLDQVLASEPAASDAIYRLTNAVRDGLSAQEEVRISGGLSRGANGSLAPVWYRIKARALEGGAEFKGPLVAWQVADISEERAEQERFFQELQEAINHLDHAPAGFFSANPAGRIIYLNATLAEWLGVDLTQFTPGSLTLNDIVAGSGMALIKAVKAEPGTSRNTVIDLDLIKRNGQSLAVRFYHRVQTARDGMPGTTRTIVLDRAEGDDSSVAQRSAEVRFTRFFNSAPMAIAAVDAEGHTLRTNARFLDIFSGVVDRDAIDRRVKLENVVHERDRETFNKALAAAFAGQASISPVDTVLPGNEERHIRFYMSPVTDLGGEAAEEAAVISAVETTEQKALENQMAQSQKMQAVGQLAGGIAHDFNNVLTAIIMSSDLLLTNHRASDPSFPDIMNIKQNANRAASLVRQLLAFSRRQTLRPEVLDLTDVLADLRMLLARLVGKDIELKIDHGRDLWPVKADLGQFEQVAVNLAVNARDAMPEGGQITLRTRNIPAADAAKLHYRDLPEADYVVFEVEDTGTGIPADVLEKIFEPFFTTKEVGKGTGLGLSMVYGIIKQTGGFIYCDSEVGKGTTFKIFLPRLIEEKRADDAPVAAKEKKVEKATDLSGSATVLLVEDEDAVRMGGVRALQSRGYTVHEAASGVEALEIMEELGGEVDIVVSDVVMPEMDGPTLLRELRKTHPDIKFIFVSGYAEDAFARNLPADAKFGFLPKPFSLKQLATTVKEMLEKQD.

The next 2 membrane-spanning stretches (helical) occupy residues 111–131 and 139–159; these read ALRL…YFLF and FALV…FGAA. 3 consecutive PAS domains span residues 171–212, 313–341, and 432–505; these read HQDL…TDAD, LDHA…EWLG, and AEVR…FAGQ. In terms of domain architecture, Histidine kinase spans 574-797; it reads GIAHDFNNVL…TFKIFLPRLI (224 aa). Histidine 577 is subject to Phosphohistidine; by autocatalysis. A Response regulatory domain is found at 825–941; that stretch reads TVLLVEDEDA…QLATTVKEML (117 aa). Aspartate 876 carries the post-translational modification 4-aspartylphosphate.

The protein resides in the cell inner membrane. It carries out the reaction ATP + protein L-histidine = ADP + protein N-phospho-L-histidine.. Its function is as follows. Component of a regulatory phosphorelay system that controls B.abortus cell growth, division, and intracellular survival inside mammalian host cells. This signaling pathway is composed of CckA, ChpT, CtrA and CpdR. CckA autophosphorylates in the presence of ATP on a conserved His residue and transfers a phosphoryl group to a conserved Asp residue on its C-terminal receiver domain. CckA-P transfers phosphoryl groups to the ChpT phosphotransferase. This is Sensor kinase CckA from Brucella abortus (strain 2308).